Consider the following 203-residue polypeptide: MLDREGFRPNVGIILLNQRSEVFWGKRIRTHSWQFPQGGIKHGESPEQAMFRELHEEVGLFPDHVRIIARTRDWLRYEVPDHFIRRDARGHYKGQKQIWFLLQLTGRDSDMNLRATDHPEFDAWRWHDYWVPLEVVIEFKRNVYQMALTELARYVPRPNHHNRYLRSGMRAHRRDEGSEHNDHLDPTGPHDAGASVSEPKQAE.

In terms of domain architecture, Nudix hydrolase spans 6 to 149 (GFRPNVGIIL…KRNVYQMALT (144 aa)). The Nudix box motif lies at 38-59 (GGIKHGESPEQAMFRELHEEVG). The tract at residues 170-203 (RAHRRDEGSEHNDHLDPTGPHDAGASVSEPKQAE) is disordered. The span at 173–185 (RRDEGSEHNDHLD) shows a compositional bias: basic and acidic residues.

The protein belongs to the Nudix hydrolase family. RppH subfamily. A divalent metal cation serves as cofactor.

Functionally, accelerates the degradation of transcripts by removing pyrophosphate from the 5'-end of triphosphorylated RNA, leading to a more labile monophosphorylated state that can stimulate subsequent ribonuclease cleavage. The protein is RNA pyrophosphohydrolase of Leptothrix cholodnii (strain ATCC 51168 / LMG 8142 / SP-6) (Leptothrix discophora (strain SP-6)).